The sequence spans 430 residues: MTRSEALFEQAKKTIPGGVNSPVRAFNGVGGSPLFIEKANGAYIYDADGKAYIDYVGSWGPMILGHNHPKIRAAVLAAVENGLSFGAPTELEVQMAEKVISMVPSIEQVRMVSSGTEATMSAIRLARGFTNRDKILKFEGCYHGHADCLLVKAGSGALTLGQPSSPGIPEDFAKHTLTAVYNDLDSVRTLFEQYPTEISCIIIEPVAGNMNCIPPIPGFLQGLRDICDEFGALMIIDEVMTGFRVSQSGAQGYYGVTPDLTTLGKVIGGGMPVGAFGGRKDVMQFIAPTGPVYQAGTLSGNPIAMSAGLAQMEALCEEGLYEELSAKTKRIAEGFKAAADKHGIPMAINYVGGMFGFFFTEQPEITRFDQVTQCNIEQFRIFYHGMLDEGVYLAPSAYEAGFLSMAHGEEEMRLTLEAADRVLASMKAAS.

Lysine 265 carries the N6-(pyridoxal phosphate)lysine modification.

This sequence belongs to the class-III pyridoxal-phosphate-dependent aminotransferase family. HemL subfamily. Homodimer. It depends on pyridoxal 5'-phosphate as a cofactor.

It localises to the cytoplasm. It catalyses the reaction (S)-4-amino-5-oxopentanoate = 5-aminolevulinate. It functions in the pathway porphyrin-containing compound metabolism; protoporphyrin-IX biosynthesis; 5-aminolevulinate from L-glutamyl-tRNA(Glu): step 2/2. This Shewanella baltica (strain OS195) protein is Glutamate-1-semialdehyde 2,1-aminomutase.